Consider the following 292-residue polypeptide: Elongation factor Ts (292 aa).

The involved in Mg(2+) ion dislocation from EF-Tu stretch occupies residues 81 to 84 (TDFV).

Belongs to the EF-Ts family.

Its subcellular location is the cytoplasm. Functionally, associates with the EF-Tu.GDP complex and induces the exchange of GDP to GTP. It remains bound to the aminoacyl-tRNA.EF-Tu.GTP complex up to the GTP hydrolysis stage on the ribosome. This chain is Elongation factor Ts, found in Acidithiobacillus ferrooxidans (strain ATCC 23270 / DSM 14882 / CIP 104768 / NCIMB 8455) (Ferrobacillus ferrooxidans (strain ATCC 23270)).